We begin with the raw amino-acid sequence, 175 residues long: Mitochondrial inner membrane protease subunit 2 (175 aa).

Residues 19-37 (FFVAVPVAVTFLDRVACVA) form a helical membrane-spanning segment. Residues S43 and K91 contribute to the active site.

This sequence belongs to the peptidase S26 family. IMP2 subfamily. Heterodimer of 2 subunits, IMMPL1 and IMMPL2. Expressed in all tissues tested except adult liver and lung.

It is found in the mitochondrion inner membrane. Functionally, catalyzes the removal of transit peptides required for the targeting of proteins from the mitochondrial matrix, across the inner membrane, into the inter-membrane space. Known to process the nuclear encoded protein DIABLO. The chain is Mitochondrial inner membrane protease subunit 2 (IMMP2L) from Homo sapiens (Human).